Here is a 455-residue protein sequence, read N- to C-terminus: Ribosome biogenesis protein NOP53 (455 aa).

Polar residues predominate over residues 1–15; the sequence is MAPTNLTKKPSQYKQ. The segment at 1–25 is disordered; that stretch reads MAPTNLTKKPSQYKQSSRKGKKAWR. The segment covering 16–25 has biased composition (basic residues); that stretch reads SSRKGKKAWR. Position 31 is a phosphoserine (Ser31). Residues 264-333 form a disordered region; that stretch reads HLMETLDDNE…RNKAKRHEEK (70 aa). Positions 268-294 are enriched in acidic residues; the sequence is TLDDNEEEESSSNEEEEEEEEENENEN. The span at 314–328 shows a compositional bias: basic residues; it reads VKNKKKTKYQRNKAK.

Belongs to the NOP53 family. In terms of assembly, interacts with CBF5, FPR3, FPR4, NOP2, PIH1, RRN3, RRP6 and PAP2. Interacts with pre-60S ribosomal particles.

It is found in the nucleus. Its subcellular location is the nucleolus. The protein localises to the nucleoplasm. Its function is as follows. Late-acting factor in the nuclear maturation of 60S ribosomal subunits, which is required for normal acquisition of export competence. Required for the export of the large subunit. Acts to stimulate the RNase activity of the exosome complex, and may recruit the exosome to 7S pre-rRNA for processing. Associates with numerous RNAs including the 27S and 7S pre-rRNAs and the box H/ACA snoRNA snR37. Also interacts (via N-terminal region) with the mature 25S rRNA and the mature 5.8S rRNA. The polypeptide is Ribosome biogenesis protein NOP53 (Saccharomyces cerevisiae (strain ATCC 204508 / S288c) (Baker's yeast)).